A 258-amino-acid chain; its full sequence is ADP-dependent (S)-NAD(P)H-hydrate dehydratase (258 aa).

The region spanning 1-258 (MGRLQRTLSN…VIECIPKTIR (258 aa)) is the YjeF C-terminal domain. Gly-201 lines the AMP pocket. A (6S)-NADPHX-binding site is contributed by Asp-202.

This sequence belongs to the NnrD/CARKD family. As to quaternary structure, homotetramer. Mg(2+) is required as a cofactor.

The catalysed reaction is (6S)-NADHX + ADP = AMP + phosphate + NADH + H(+). The enzyme catalyses (6S)-NADPHX + ADP = AMP + phosphate + NADPH + H(+). Its function is as follows. Catalyzes the dehydration of the S-form of NAD(P)HX at the expense of ADP, which is converted to AMP. Together with NAD(P)HX epimerase, which catalyzes the epimerization of the S- and R-forms, the enzyme allows the repair of both epimers of NAD(P)HX, a damaged form of NAD(P)H that is a result of enzymatic or heat-dependent hydration. This chain is ADP-dependent (S)-NAD(P)H-hydrate dehydratase, found in Natrialba magadii (strain ATCC 43099 / DSM 3394 / CCM 3739 / CIP 104546 / IAM 13178 / JCM 8861 / NBRC 102185 / NCIMB 2190 / MS3) (Natronobacterium magadii).